The following is a 170-amino-acid chain: Calcineurin subunit B type 1 (170 aa).

G2 is lipidated: N-myristoyl glycine. EF-hand domains follow at residues 18 to 46 (DEIK…FMSL), 50 to 85 (QQNP…FSVK), 87 to 122 (DKEQ…MVGN), and 128 to 163 (QLQQ…LDIH). Ca(2+)-binding residues include D31, D33, S35, S37, E42, D63, D65, N67, E69, E74, D100, D102, D104, Y106, and E111. Position 106 is a phosphotyrosine (Y106). The segment at 131–136 (QIVDKT) is calcineurin A binding. Ca(2+) contacts are provided by D141, D143, D145, R147, and E152.

This sequence belongs to the calcineurin regulatory subunit family. As to quaternary structure, forms a complex composed of a calmodulin-dependent catalytic subunit (also known as calcineurin A) and a regulatory Ca(2+)-binding subunit (also known as calcineurin B). There are three catalytic subunits, each encoded by a separate gene (PPP3CA, PPP3CB, and PPP3CC) and two regulatory subunits which are also encoded by separate genes (PPP3R1 and PPP3R2). The interaction between the 2 subunits is Ca(2+)-independent. Interacts with catalytic subunit PPP3CA/calcineurin A. Interacts with catalytic subunit PPP3CB/calcineurin A. Interacts with CIB1 (via C-terminal region); the interaction increases upon cardiomyocyte hypertrophy. Interacts with RCAN1. Interacts with SPATA33 (via PQIIIT motif).

The protein localises to the cytoplasm. Its subcellular location is the cytosol. It localises to the cell membrane. The protein resides in the sarcolemma. Functionally, regulatory subunit of calcineurin, a calcium-dependent, calmodulin stimulated protein phosphatase. Confers calcium sensitivity. The protein is Calcineurin subunit B type 1 (PPP3R1) of Bos taurus (Bovine).